Consider the following 703-residue polypeptide: Glycogen [starch] synthase, liver (703 aa).

S8 is subject to Phosphoserine; by PKA. S11 carries the post-translational modification Phosphoserine. K40 serves as a coordination point for UDP. UDP-alpha-D-glucose contacts are provided by H205 and R211. Residues H291, E292, Q294, H297, and K301 each contribute to the alpha-D-glucose 6-phosphate site. R331 provides a ligand contact to UDP. R331 is a binding site for UDP-alpha-D-glucose. Residue H501 coordinates alpha-D-glucose 6-phosphate. E510, W512, and G513 together coordinate UDP-alpha-D-glucose. UDP is bound at residue T515. Residues R582 and R586 each contribute to the alpha-D-glucose 6-phosphate site. S627 carries the post-translational modification Phosphoserine. Residues 628 to 703 (PPTTEGFKYP…KKKLHGEYKN (76 aa)) are disordered. Phosphoserine; by GSK3-alpha and GSK3-beta is present on residues S641, S645, S649, and S653. Residues 647 to 657 (SGSQASSPQSS) show a composition bias toward low complexity. S657 is modified (phosphoserine; by CK2). Acidic residues predominate over residues 658–674 (DVEDEVEDERYDEEEEA). S683 is modified (phosphoserine).

Belongs to the glycosyltransferase 3 family. Part of the glycogen synthase (GS)-glycogenin complex, a heterooctamer composed of a tetramer of GS and 2 dimers of glycogenin, where each GS protomer binds to one glycogenin subunit (via glycogenin C-terminus); the GS tetramer may dissociate from glycogenin dimers to continue glycogen polymerization on its own. May also form a heterooctamer complex with GYG1 (via GYG1 C-terminus). In terms of processing, primed phosphorylation at Ser-657 (site 5) by CSNK2A1 and CSNK2A2 is required for inhibitory phosphorylation at Ser-641 (site 3a), Ser-645 (site 3b), Ser-649 (site 3c) and Ser-653 (site 4) by GSK3A an GSK3B. Dephosphorylation at Ser-641 and Ser-645 by PP1 activates the enzyme. Phosphorylation at Ser-8 is not required for interaction with GYG1. Interaction with GYG1 does not regulate the phosphorylation at Ser-8 and Ser-641. Specifically expressed in liver (at protein level).

It catalyses the reaction [(1-&gt;4)-alpha-D-glucosyl](n) + UDP-alpha-D-glucose = [(1-&gt;4)-alpha-D-glucosyl](n+1) + UDP + H(+). It participates in glycan biosynthesis; glycogen biosynthesis. Allosteric activation by glucose-6-phosphate. Phosphorylation reduces the activity towards UDP-glucose. When in the non-phosphorylated state, glycogen synthase does not require glucose-6-phosphate as an allosteric activator; when phosphorylated it does. In terms of biological role, glycogen synthase participates in the glycogen biosynthetic process along with glycogenin and glycogen branching enzyme. Extends the primer composed of a few glucose units formed by glycogenin by adding new glucose units to it. In this context, glycogen synthase transfers the glycosyl residue from UDP-Glc to the non-reducing end of alpha-1,4-glucan. In Homo sapiens (Human), this protein is Glycogen [starch] synthase, liver.